We begin with the raw amino-acid sequence, 385 residues long: Methionyl-tRNA formyltransferase, mitochondrial (385 aa).

Belongs to the Fmt family.

The protein resides in the mitochondrion. It carries out the reaction L-methionyl-tRNA(fMet) + (6R)-10-formyltetrahydrofolate = N-formyl-L-methionyl-tRNA(fMet) + (6S)-5,6,7,8-tetrahydrofolate + H(+). Its function is as follows. Methionyl-tRNA formyltransferase that formylates methionyl-tRNA in mitochondria and is crucial for translation initiation. This Rattus norvegicus (Rat) protein is Methionyl-tRNA formyltransferase, mitochondrial (Mtfmt).